Consider the following 117-residue polypeptide: Large ribosomal subunit protein bL17 (117 aa).

This sequence belongs to the bacterial ribosomal protein bL17 family. In terms of assembly, part of the 50S ribosomal subunit. Contacts protein L32.

This Campylobacter jejuni subsp. doylei (strain ATCC BAA-1458 / RM4099 / 269.97) protein is Large ribosomal subunit protein bL17.